The primary structure comprises 243 residues: Orotidine 5'-phosphate decarboxylase (243 aa).

Substrate is bound by residues Asp-12, Lys-34, 61–70 (DLKFHDIPNT), Thr-125, Arg-187, Gln-196, Gly-216, and Arg-217. The active-site Proton donor is the Lys-63.

It belongs to the OMP decarboxylase family. Type 1 subfamily. In terms of assembly, homodimer.

The enzyme catalyses orotidine 5'-phosphate + H(+) = UMP + CO2. Its pathway is pyrimidine metabolism; UMP biosynthesis via de novo pathway; UMP from orotate: step 2/2. Its function is as follows. Catalyzes the decarboxylation of orotidine 5'-monophosphate (OMP) to uridine 5'-monophosphate (UMP). This Heliobacterium modesticaldum (strain ATCC 51547 / Ice1) protein is Orotidine 5'-phosphate decarboxylase.